Consider the following 569-residue polypeptide: uncharacterized protein (569 aa).

A signal peptide spans 1–22 (MSLLVKAALILKCASMLQGVSA). The segment at 498-541 (RETSILDSTNTTSTNATNTTTTTSSSSTASSSASASSSTSATSG) is disordered. Residues 505–540 (STNTTSTNATNTTTTTSSSSTASSSASASSSTSATS) show a composition bias toward low complexity.

The protein localises to the secreted. The protein resides in the cell surface. This is an uncharacterized protein from Schizosaccharomyces pombe (strain 972 / ATCC 24843) (Fission yeast).